Reading from the N-terminus, the 92-residue chain is Sec-independent protein translocase protein TatA (92 aa).

A helical transmembrane segment spans residues M1–G21. Residues N44–S92 form a disordered region. Residues T72–S92 show a composition bias toward basic and acidic residues.

The protein belongs to the TatA/E family. As to quaternary structure, the Tat system comprises two distinct complexes: a TatABC complex, containing multiple copies of TatA, TatB and TatC subunits, and a separate TatA complex, containing only TatA subunits. Substrates initially bind to the TatABC complex, which probably triggers association of the separate TatA complex to form the active translocon.

It is found in the cell inner membrane. Functionally, part of the twin-arginine translocation (Tat) system that transports large folded proteins containing a characteristic twin-arginine motif in their signal peptide across membranes. TatA could form the protein-conducting channel of the Tat system. This chain is Sec-independent protein translocase protein TatA, found in Pseudomonas fluorescens (strain SBW25).